Reading from the N-terminus, the 247-residue chain is ATP synthase subunit a, chloroplastic (247 aa).

Transmembrane regions (helical) follow at residues 38 to 58 (QVLITSWVVIAILLGSVIIAV), 95 to 115 (VPFIGTMFLFIFVSNWSGALL), 134 to 154 (INTTVALALPTSVAYFYAGLT), 199 to 219 (LVVVVLVSLVPSLVPIPVMFL), and 220 to 240 (GLFTSGIQALIFATLAAAYIG).

Belongs to the ATPase A chain family. As to quaternary structure, F-type ATPases have 2 components, CF(1) - the catalytic core - and CF(0) - the membrane proton channel. CF(1) has five subunits: alpha(3), beta(3), gamma(1), delta(1), epsilon(1). CF(0) has four main subunits: a, b, b' and c.

It localises to the plastid. It is found in the chloroplast thylakoid membrane. Key component of the proton channel; it plays a direct role in the translocation of protons across the membrane. This Dioscorea elephantipes (Elephant's foot yam) protein is ATP synthase subunit a, chloroplastic.